Consider the following 223-residue polypeptide: Deoxyribose-phosphate aldolase (223 aa).

Catalysis depends on Asp92, which acts as the Proton donor/acceptor. The Schiff-base intermediate with acetaldehyde role is filled by Lys153. The Proton donor/acceptor role is filled by Lys182.

This sequence belongs to the DeoC/FbaB aldolase family. DeoC type 1 subfamily.

The protein localises to the cytoplasm. It carries out the reaction 2-deoxy-D-ribose 5-phosphate = D-glyceraldehyde 3-phosphate + acetaldehyde. It participates in carbohydrate degradation; 2-deoxy-D-ribose 1-phosphate degradation; D-glyceraldehyde 3-phosphate and acetaldehyde from 2-deoxy-alpha-D-ribose 1-phosphate: step 2/2. Its function is as follows. Catalyzes a reversible aldol reaction between acetaldehyde and D-glyceraldehyde 3-phosphate to generate 2-deoxy-D-ribose 5-phosphate. The chain is Deoxyribose-phosphate aldolase from Mycoplasmoides gallisepticum (strain R(low / passage 15 / clone 2)) (Mycoplasma gallisepticum).